The primary structure comprises 283 residues: Acetyl-coenzyme A carboxylase carboxyl transferase subunit beta (283 aa).

Residues 23–283 (LWIKCPSCSE…DFLMAGKAAA (261 aa)) form the CoA carboxyltransferase N-terminal domain. Zn(2+)-binding residues include Cys27, Cys30, Cys46, and Cys49. The segment at 27–49 (CPSCSEMLFTKEYEDNLSVCPHC) adopts a C4-type zinc-finger fold.

It belongs to the AccD/PCCB family. As to quaternary structure, acetyl-CoA carboxylase is a heterohexamer composed of biotin carboxyl carrier protein (AccB), biotin carboxylase (AccC) and two subunits each of ACCase subunit alpha (AccA) and ACCase subunit beta (AccD). The cofactor is Zn(2+).

Its subcellular location is the cytoplasm. It catalyses the reaction N(6)-carboxybiotinyl-L-lysyl-[protein] + acetyl-CoA = N(6)-biotinyl-L-lysyl-[protein] + malonyl-CoA. Its pathway is lipid metabolism; malonyl-CoA biosynthesis; malonyl-CoA from acetyl-CoA: step 1/1. Its function is as follows. Component of the acetyl coenzyme A carboxylase (ACC) complex. Biotin carboxylase (BC) catalyzes the carboxylation of biotin on its carrier protein (BCCP) and then the CO(2) group is transferred by the transcarboxylase to acetyl-CoA to form malonyl-CoA. The sequence is that of Acetyl-coenzyme A carboxylase carboxyl transferase subunit beta from Novosphingobium aromaticivorans (strain ATCC 700278 / DSM 12444 / CCUG 56034 / CIP 105152 / NBRC 16084 / F199).